A 771-amino-acid chain; its full sequence is PH and SEC7 domain-containing protein 2 (771 aa).

Disordered stretches follow at residues 1-67 and 107-136; these read MEED…PDVA and GDNA…VRDG. Over residues 47-66 the composition is skewed to basic and acidic residues; sequence GHERRGTPADTEEPTKDPDV. A Phosphoserine modification is found at Ser-191. 2 disordered regions span residues 207–230 and 244–307; these read GDMG…SSSR and PNGF…ANGC. Residues 218 to 230 show a composition bias toward low complexity; sequence LGSPLRRSISSSR. Acidic residues predominate over residues 257–266; that stretch reads GDEDDDEEDT. Residues 260–462 enclose the SEC7 domain; sequence DDDEEDTDKL…KTLYNSIKNE (203 aa). Residues 288 to 299 show a composition bias toward low complexity; sequence ELSSSEGLEPGS. The 114-residue stretch at 512–625 folds into the PH domain; that stretch reads TTYKHGVLTR…WILRINLVAA (114 aa). Residues 622 to 639 traverse the membrane as a helical segment; sequence LVAAIFSAPAFPAAVSSM. Residues 651-680 are a coiled coil; sequence TTRLCQEEQLRSHENKLRQLTAELAEHRCH. The interval 739 to 771 is disordered; it reads DDPSLRKTHSSPALSQGHVTGSKTTKDATGPDT. Residues 748–761 show a composition bias toward polar residues; sequence SSPALSQGHVTGSK.

This sequence belongs to the PSD family.

It is found in the cell membrane. The protein localises to the cell projection. The protein resides in the ruffle membrane. Its subcellular location is the cleavage furrow. The sequence is that of PH and SEC7 domain-containing protein 2 (PSD2) from Homo sapiens (Human).